We begin with the raw amino-acid sequence, 170 residues long: Photosystem I assembly protein Ycf3 (170 aa).

TPR repeat units lie at residues 35 to 68 (AFTY…EIDP), 72 to 105 (SYIL…NPFL), and 120 to 153 (GEQA…TPGN).

The protein belongs to the Ycf3 family.

It is found in the plastid. The protein localises to the chloroplast thylakoid membrane. Functionally, essential for the assembly of the photosystem I (PSI) complex. May act as a chaperone-like factor to guide the assembly of the PSI subunits. This Oryza sativa (Rice) protein is Photosystem I assembly protein Ycf3.